Reading from the N-terminus, the 507-residue chain is MGRKKIQITRIMDERNRQVTFTKRKFGLMKKAYELSVLCDCEIALIIFNSSNKLFQYASTDMDKVLLKYTEYNEPHESRTNSDIVEALNKKEHRGCDSPDPDTSYVLTPHTEEKYKKINEEFDNMMRNHKIAPGLPPQNFSMSVTVPVTSPNALSYTNPGSSLVSPSLAASSTLTDSSMLSPPQTTLHRNVSPGAPQRPPSTGNAGGMLSTTDLTVPNGAGSSPVGNGFVNSRASPNLIGATGANSLGKVMPTKSPPPPGGGNLGMNSRKPDLRVVIPPSSKGMMPPLSEEEELELNTQRISSSQATQPLATPVVSVTTPSLPPQGLVYSAMPTAYNTDYSLTSADLSALQGFNSPGMLSLGQVSAWQQHHLGQAALSSLVAGGQLSQGSNLSINTNQNISIKSEPISPPRDRMTPSGFQQQQQQQQQQQPPPPPQPQPQPPQPQPRQEMGRSPVDSLSSSSSSYDGSDREDPRGDFHSPIVLGRPPNTEDRESPSVKRMRMDAWVT.

The region spanning 3-57 is the MADS-box domain; the sequence is RKKIQITRIMDERNRQVTFTKRKFGLMKKAYELSVLCDCEIALIIFNSSNKLFQY. K30 carries the phosphoserine modification. A DNA-binding region (mef2-type) is located at residues 58–86; that stretch reads ASTDMDKVLLKYTEYNEPHESRTNSDIVE. S59 is subject to Phosphoserine; by CK2. Phosphoserine is present on S98. Positions 173–183 are enriched in low complexity; it reads TLTDSSMLSPP. Residues 173 to 229 are disordered; sequence TLTDSSMLSPPQTTLHRNVSPGAPQRPPSTGNAGGMLSTTDLTVPNGAGSSPVGNGF. Positions 209-229 are enriched in polar residues; sequence LSTTDLTVPNGAGSSPVGNGF. The residue at position 235 (S235) is a Phosphoserine. The interval 243–270 is disordered; sequence GANSLGKVMPTKSPPPPGGGNLGMNSRK. At K249 the chain carries N6-acetyllysine. S255 carries the post-translational modification Phosphoserine; by MAPK14. The interval 266-283 is required for interaction with MAPKs; sequence MNSRKPDLRVVIPPSSKG. Residues 289 to 296 form a beta domain region; sequence SEEEELEL. 2 positions are modified to phosphothreonine; by MAPK7 and MAPK14: T312 and T319. T312 is subject to Phosphothreonine; by NLK. S355 carries the post-translational modification Phosphoserine; by MAPK7. The tract at residues 397–507 is disordered; that stretch reads NQNISIKSEP…KRMRMDAWVT (111 aa). K403 carries the N6-acetyllysine; alternate modification. K403 is covalently cross-linked (Glycyl lysine isopeptide (Lys-Gly) (interchain with G-Cter in SUMO); alternate). S408 carries the post-translational modification Phosphoserine; by CDK5. Phosphothreonine is present on T415. Residues 420-429 are compositionally biased toward low complexity; sequence QQQQQQQQQQ. Positions 430-445 are enriched in pro residues; it reads QPPPPPQPQPQPPQPQ. Residue S453 is modified to Phosphoserine; by MAPK. The segment covering 453–466 has biased composition (low complexity); it reads SPVDSLSSSSSSYD. 2 stretches are compositionally biased toward basic and acidic residues: residues 467–477 and 488–507; these read GSDREDPRGDF and NTED…AWVT.

The protein belongs to the MEF2 family. In terms of assembly, binds DNA as a homo- or heterodimer. Dimerizes with MEF2D. Interacts with HDAC7. Interacts with PIAS1; the interaction enhances sumoylation. Interacts with HDAC4, HDAC9 and SLC2A4RG. Interacts (via the N-terminal) with MAPK7; the interaction results in the phosphorylation and transcriptional activity of MEF2A. In terms of processing, constitutive phosphorylation on Ser-408 promotes Lys-403 sumoylation thus preventing acetylation at this site. Dephosphorylation on Ser-408 by PPP3CA upon neuron depolarization promotes a switch from sumoylation to acetylation on residue Lys-403 leading to inhibition of dendrite claw differentiation. Phosphorylation on Thr-312 and Thr-319 are the main sites involved in p38 MAPK signaling and activate transcription. Phosphorylated on these sites by MAPK14/p38alpha and MAPK11/p38beta, but not by MAPK13/p38delta nor by MAPK12/p38gamma. Phosphorylation on Ser-408 by CDK5 induced by neurotoxicity inhibits MEF2A transcriptional activation leading to apoptosis of cortical neurons. Phosphorylation on Thr-312, Thr-319 and Ser-355 can be induced by EGF. Post-translationally, sumoylation on Lys-403 is enhanced by PIAS1 and represses transcriptional activity. Phosphorylation on Ser-408 is required for sumoylation. Has no effect on nuclear location nor on DNA binding. Sumoylated with SUMO1 and, to a lesser extent with SUMO2 and SUMO3. PIASx facilitates sumoylation in postsynaptic dendrites in the cerebellar cortex and promotes their morphogenesis. Acetylation on Lys-403 activates transcriptional activity. Acetylated by p300 on several sites in diffentiating myocytes. Acetylation on Lys-4 increases DNA binding and transactivation. Hyperacetylation by p300 leads to enhanced cardiac myocyte growth and heart failure. In terms of processing, proteolytically cleaved in cerebellar granule neurons on several sites by caspase 3 and caspase 7 following neurotoxicity. Preferentially cleaves the CDK5-mediated hyperphosphorylated form which leads to neuron apoptosis and transcriptional inactivation. Isoform MEF2 and isoform MEFA are expressed only in skeletal and cardiac muscle and in the brain. Isoform RSRFC4 and isoform RSRFC9 are expressed in all tissues examined.

The protein resides in the nucleus. In terms of biological role, transcriptional activator which binds specifically to the MEF2 element, 5'-YTA[AT](4)TAR-3', found in numerous muscle-specific genes. Also involved in the activation of numerous growth factor- and stress-induced genes. Mediates cellular functions not only in skeletal and cardiac muscle development, but also in neuronal differentiation and survival. Plays diverse roles in the control of cell growth, survival and apoptosis via p38 MAPK signaling in muscle-specific and/or growth factor-related transcription. In cerebellar granule neurons, phosphorylated and sumoylated MEF2A represses transcription of NUR77 promoting synaptic differentiation. Associates with chromatin to the ZNF16 promoter. This chain is Myocyte-specific enhancer factor 2A (MEF2A), found in Homo sapiens (Human).